The chain runs to 535 residues: Alpha-1,3-mannosyl-glycoprotein 4-beta-N-acetylglucosaminyltransferase A (535 aa).

At Met-1–Arg-4 the chain is on the cytoplasmic side. The chain crosses the membrane as a helical; Signal-anchor for type II membrane protein span at residues Asn-5 to Trp-27. The stretch at Gln-28–Asn-63 forms a coiled coil. Residues Gln-28–Lys-535 lie on the Lumenal side of the membrane. 2 N-linked (GlcNAc...) asparagine glycosylation sites follow: Asn-77 and Asn-458. A Phosphoserine modification is found at Ser-474.

The protein belongs to the glycosyltransferase 54 family. It depends on a divalent metal cation as a cofactor. In terms of processing, N-glycosylated.

It is found in the golgi apparatus membrane. The protein localises to the secreted. It carries out the reaction N(4)-{beta-D-GlcNAc-(1-&gt;2)-alpha-D-Man-(1-&gt;3)-[beta-D-GlcNAc-(1-&gt;2)-alpha-D-Man-(1-&gt;6)]-beta-D-Man-(1-&gt;4)-beta-D-GlcNAc-(1-&gt;4)-beta-D-GlcNAc}-L-asparaginyl-[protein] + UDP-N-acetyl-alpha-D-glucosamine = N(4)-{beta-D-GlcNAc-(1-&gt;2)-[beta-D-GlcNAc-(1-&gt;4)]-alpha-D-Man-(1-&gt;3)-[beta-D-GlcNAc-(1-&gt;2)-alpha-D-Man-(1-&gt;6)]-beta-D-Man-(1-&gt;4)-beta-D-GlcNAc-(1-&gt;4)-beta-D-GlcNAc}-L-asparaginyl-[protein] + UDP + H(+). The enzyme catalyses an N(4)-{beta-D-GlcNAc-(1-&gt;2)-alpha-D-Man-(1-&gt;3)-[alpha-D-Man-(1-&gt;6)]-beta-D-Man-(1-&gt;4)-beta-D-GlcNAc-(1-&gt;4)-beta-D-GlcNAc}-L-asparaginyl-[protein] + UDP-N-acetyl-alpha-D-glucosamine = an N(4)-{beta-D-GlcNAc-(1-&gt;2)-[beta-D-GlcNAc-(1-&gt;4)]-alpha-D-Man-(1-&gt;3)-[alpha-D-Man-(1-&gt;6)]-beta-D-Man-(1-&gt;4)-beta-D-GlcNAc-(1-&gt;4)-beta-D-GlcNAc}-L-asparaginyl-[protein] + UDP + H(+). It catalyses the reaction an N(4)-{beta-D-GlcNAc-(1-&gt;2)-alpha-D-Man-(1-&gt;3)-[beta-D-GlcNAc-(1-&gt;2)-[beta-D-GlcNAc-(1-&gt;6)]-alpha-D-Man-(1-&gt;6)]-beta-D-Man-(1-&gt;4)-beta-D-GlcNAc-(1-&gt;4)-beta-D-GlcNAc}-L-asparaginyl-[protein] + UDP-N-acetyl-alpha-D-glucosamine = an N(4)-{beta-D-GlcNAc-(1-&gt;2)-[beta-D-GlcNAc-(1-&gt;4)]-alpha-D-Man-(1-&gt;3)-[beta-D-GlcNAc-(1-&gt;2)-[beta-D-GlcNAc-(1-&gt;6)]-alpha-D-Man-(1-&gt;6)]-beta-D-Man-(1-&gt;4)-beta-D-GlcNAc-(1-&gt;4)-beta-D-GlcNAc}-L-asparaginyl-[protein] + UDP + H(+). The catalysed reaction is an N(4)-{beta-D-GlcNAc-(1-&gt;2)-alpha-D-Man-(1-&gt;3)-[beta-D-GlcNAc-(1-&gt;2)-alpha-D-Man-(1-&gt;6)]-beta-D-Man-(1-&gt;4)-beta-D-GlcNAc-(1-&gt;4)-[alpha-L-Fuc-(1-&gt;6)]-beta-D-GlcNAc}-L-asparaginyl-[protein] + UDP-N-acetyl-alpha-D-glucosamine = N(4)-{beta-D-GlcNAc-(1-&gt;2)-[beta-D-GlcNAc-(1-&gt;4)]-alpha-D-Man-(1-&gt;3)-[beta-D-GlcNAc-(1-&gt;2)-alpha-D-Man-(1-&gt;6)]-beta-D-Man-(1-&gt;4)-beta-D-GlcNAc-(1-&gt;4)-[alpha-L-Fuc-(1-&gt;6)]-beta-D-GlcNAc}-asparaginyl-[protein] + UDP + H(+). It carries out the reaction an N(4)-{beta-D-GlcNAc-(1-&gt;2)-alpha-D-Man-(1-&gt;3)-[beta-D-Gal-(1-&gt;4)-beta-D-GlcNAc-(1-&gt;2)-alpha-D-Man-(1-&gt;6)]-beta-D-Man-(1-&gt;4)-beta-D-GlcNAc-(1-&gt;4)-beta-D-GlcNAc}-L-asparaginyl-[protein] + UDP-N-acetyl-alpha-D-glucosamine = an N(4)-{beta-D-GlcNAc-(1-&gt;2)-[beta-D-GlcNAc-(1-&gt;4)]-alpha-D-Man-(1-&gt;3)-[beta-D-Gal-(1-&gt;4)-beta-D-GlcNAc-(1-&gt;2)-alpha-D-Man-(1-&gt;6)]-beta-D-Man-(1-&gt;4)-beta-D-GlcNAc-(1-&gt;4)-beta-D-GlcNAc}-L-asparaginyl-[protein] + UDP + H(+). The enzyme catalyses N(4)-{beta-D-GlcNAc-(1-&gt;2)-alpha-D-Man-(1-&gt;3)-[alpha-D-Man-(1-&gt;3)-{alpha-D-Man-(1-&gt;6)}-alpha-D-Man-(1-&gt;6)]-beta-D-Man-(1-&gt;4)-beta-D-GlcNAc-(1-&gt;4)-beta-D-GlcNAc}-asparaginyl-[protein] + UDP-N-acetyl-alpha-D-glucosamine = N(4)-{beta-D-GlcNAc-(1-&gt;2)-[beta-D-GlcNAc-(1-&gt;4)]-alpha-D-Man-(1-&gt;3)-[alpha-D-Man-(1-&gt;3)-{alpha-D-Man-(1-&gt;6)}-alpha-D-Man-(1-&gt;6)]-beta-D-Man-(1-&gt;4)-beta-D-GlcNAc-(1-&gt;4)-beta-D-GlcNAc}-asparaginyl-[protein] + UDP + H(+). It catalyses the reaction N(4)-{beta-D-GlcNAc-(1-&gt;2)-alpha-D-Man-(1-&gt;3)-beta-D-Man-(1-&gt;4)-beta-D-GlcNAc-(1-&gt;4)-beta-D-GlcNAc}-asparaginyl-[protein] + UDP-N-acetyl-alpha-D-glucosamine = N(4)-{beta-D-GlcNAc-(1-&gt;2)-[beta-D-GlcNAc-(1-&gt;4)]-alpha-D-Man-(1-&gt;3)-beta-D-Man-(1-&gt;4)-beta-D-GlcNAc-(1-&gt;4)-beta-D-GlcNAc}-asparaginyl-[protein] + UDP + H(+). Its pathway is protein modification; protein glycosylation. With respect to regulation, inhibited by UDP. Glycosyltransferase that catalyze the transfer of GlcNAc from UDP-GlcNAc to the GlcNAcbeta1-2Manalpha1-3 arm of the core structure of N-linked glycans through a beta1-4 linkage and participates in the production of tri- and tetra-antennary N-linked sugar chains. Involved in glucose transport by mediating SLC2A2/GLUT2 glycosylation, thereby controlling cell-surface expression of SLC2A2 in pancreatic beta cells. The polypeptide is Alpha-1,3-mannosyl-glycoprotein 4-beta-N-acetylglucosaminyltransferase A (Macaca fascicularis (Crab-eating macaque)).